Consider the following 423-residue polypeptide: Keratin, type I cytoskeletal 18 (423 aa).

S2 is subject to N-acetylserine. A head region spans residues 2–71 (SFTTRSTTFS…GLAGMGGIQT (70 aa)). A phosphoserine mark is found at S7, S11, S16, and S19. 2 positions are modified to phosphoserine; alternate: S31 and S32. O-linked (GlcNAc) serine; alternate glycans are attached at residues S31 and S32. S35 carries the phosphoserine modification. Y37 bears the Phosphotyrosine mark. S43 is modified (phosphoserine). R46 is modified (omega-N-methylarginine). A Phosphoserine; alternate modification is found at S50. S50 carries an O-linked (GlcNAc) serine; alternate glycan. S52 bears the Phosphoserine; by MAPKAPK2 and MAPKAPK3 mark. Phosphoserine is present on residues S57 and S60. Residues 62-366 (GLAGMGGIQT…EALLNIKVKL (305 aa)) form a necessary for interaction with PNN region. The interaction with TRADD stretch occupies residues 69-121 (IQTEKETMQDLNDRLASYLDKVKSLETENRRLESKIREHLEKKGPQGVRDWGH). The coil 1A stretch occupies residues 72–107 (EKETMQDLNDRLASYLDKVKSLETENRRLESKIREH). The 313-residue stretch at 72–384 (EKETMQDLND…RLLEDGEDFS (313 aa)) folds into the IF rod domain. K73 is covalently cross-linked (Glycyl lysine isopeptide (Lys-Gly) (interchain with G-Cter in SUMO2)). Phosphoserine occurs at positions 85 and 92. The segment at 108-125 (LEKKGPQGVRDWGHYFKI) is linker 1. The residue at position 124 (K124) is an N6-acetyllysine. Residues 126 to 217 (IEDLRAQIFA…KNHEEEVQGL (92 aa)) form a coil 1B region. S137 and S170 each carry phosphoserine. A linker 12 region spans residues 218 to 241 (EAQIASSGLTVEVDAPKSQDLSKI). Positions 236–384 (QDLSKIMADI…RLLEDGEDFS (149 aa)) are interaction with DNAJB6. A Glycyl lysine isopeptide (Lys-Gly) (interchain with G-Cter in SUMO2) cross-link involves residue K240. The segment at 242-380 (MADIRAQYEA…ATYRRLLEDG (139 aa)) is coil 2. Phosphothreonine is present on T295. S316 carries the phosphoserine modification. Residues K363 and K365 each participate in a glycyl lysine isopeptide (Lys-Gly) (interchain with G-Cter in SUMO2) cross-link. Residues 381–423 (EDFSLNDALDSSNSMQTVQKTTTRKIVDGRVVSETNDTRVLRH) form a tail region. 4 positions are modified to phosphoserine: S384, S391, S392, and S394. T397 bears the Phosphothreonine mark.

The protein belongs to the intermediate filament family. In terms of assembly, heterotetramer of two type I and two type II keratins. KRT18 associates with KRT8. Interacts with PLEC isoform 1C, when in a heterodimer with KRT8. Interacts with PNN and mutated CFTR. Interacts with YWHAE, YWHAH and YWHAZ only when phosphorylated. Interacts with the thrombin-antithrombin complex. Interacts with DNAJB6, TCHP and TRADD. Interacts with FAM83H. Interacts with EPPK1. Interacts with PKP1 and PKP2. Phosphorylation increases by IL-6. In terms of processing, proteolytically cleaved by caspases during epithelial cell apoptosis. Cleavage occurs at Asp-231 by either caspase-3, caspas-6 or caspase-7. Post-translationally, O-GlcNAcylation increases solubility, and decreases stability by inducing proteasomal degradation. As to expression, expressed in endoderm, intestinal epithelial cells and in most extraembryonic tissues.

Its subcellular location is the nucleus matrix. The protein resides in the cytoplasm. The protein localises to the perinuclear region. It is found in the nucleus. It localises to the nucleolus. When phosphorylated, plays a role in filament reorganization. Involved in the delivery of mutated CFTR to the plasma membrane. Involved in the uptake of thrombin-antithrombin complexes by hepatic cells. Together with KRT8, is involved in interleukin-6 (IL-6)-mediated barrier protection. The polypeptide is Keratin, type I cytoskeletal 18 (Krt18) (Mus musculus (Mouse)).